We begin with the raw amino-acid sequence, 436 residues long: uncharacterized protein (436 aa).

The helical transmembrane segment at 1–21 (MILLQVICTIWTCLFIPLLNA) threads the bilayer. 2 BNR repeats span residues 57-68 (WISSDSGENWEA) and 101-112 (YVTDDRGKSWRA). Residue N157 is glycosylated (N-linked (GlcNAc...) asparagine). BNR repeat units lie at residues 229–240 (ALSTDGGKTFKK) and 394–405 (KISVDNGLTWSN).

It localises to the membrane. This is an uncharacterized protein from Saccharomyces cerevisiae (strain ATCC 204508 / S288c) (Baker's yeast).